The chain runs to 351 residues: Cysteine-rich receptor-like protein kinase 45 (351 aa).

The region spanning 37 to 287 is the Protein kinase domain; sequence NDFSELVGRG…EILRYIHIAL (251 aa). ATP is bound by residues 43–51 and K65; that span reads VGRGGFGFV. Y110 is modified (phosphotyrosine). D162 acts as the Proton acceptor in catalysis. 2 positions are modified to phosphothreonine: T197 and T202. Position 210 is a phosphotyrosine (Y210).

The protein belongs to the protein kinase superfamily. Ser/Thr protein kinase family. CRK subfamily. In terms of assembly, interacts with CRK36. Autophosphorylated and phosphorylated by CRK36.

It localises to the cytoplasm. Its subcellular location is the cytosol. It carries out the reaction L-seryl-[protein] + ATP = O-phospho-L-seryl-[protein] + ADP + H(+). The catalysed reaction is L-threonyl-[protein] + ATP = O-phospho-L-threonyl-[protein] + ADP + H(+). Its function is as follows. Forms a complex with CRK36 that may negatively control abscisic acid (ABA) and osmotic stress signal transduction. Involved in plant response to ABA during seed germination, early seedling growth and responses to abiotic stresses by inducing the expression of ABA-responsive genes and stress-inducible genes. Acts as a positive regulator in disease resistance, downstream of NPR1 and WRKY70. This is Cysteine-rich receptor-like protein kinase 45 from Arabidopsis thaliana (Mouse-ear cress).